We begin with the raw amino-acid sequence, 861 residues long: Ribosome biogenesis protein BOP1 homolog (861 aa).

Positions 1–237 (MVANKSKATK…GDTSDEEDIR (237 aa)) are disordered. Positions 29–45 (NGRSTKQPEADSDQSAS) are enriched in polar residues. Composition is skewed to acidic residues over residues 62–77 (DDGD…DASD) and 87–143 (SDSD…EDLA). Basic and acidic residues-rich tracts occupy residues 144 to 156 (EPEK…EGSK), 174 to 190 (ETKK…EKLA), and 212 to 223 (PERKTGRLKNSD). WD repeat units lie at residues 522 to 561 (GHTD…CIKT), 563 to 603 (PTGD…CLLS), 692 to 730 (KSKG…LLKK), 733 to 772 (PSCK…RPYQ), 776 to 815 (LHFS…DLMQ), and 831 to 861 (VNDF…RLYT).

It belongs to the WD repeat BOP1/ERB1 family.

Its subcellular location is the nucleus. The protein resides in the nucleolus. It is found in the nucleoplasm. Functionally, required for maturation of ribosomal RNAs and formation of the large ribosomal subunit. The sequence is that of Ribosome biogenesis protein BOP1 homolog from Culex quinquefasciatus (Southern house mosquito).